The sequence spans 269 residues: 2-dehydro-3-deoxyphosphooctonate aldolase (269 aa).

The protein belongs to the KdsA family.

The protein localises to the cytoplasm. The catalysed reaction is D-arabinose 5-phosphate + phosphoenolpyruvate + H2O = 3-deoxy-alpha-D-manno-2-octulosonate-8-phosphate + phosphate. It functions in the pathway carbohydrate biosynthesis; 3-deoxy-D-manno-octulosonate biosynthesis; 3-deoxy-D-manno-octulosonate from D-ribulose 5-phosphate: step 2/3. Its pathway is bacterial outer membrane biogenesis; lipopolysaccharide biosynthesis. In Chlamydia abortus (strain DSM 27085 / S26/3) (Chlamydophila abortus), this protein is 2-dehydro-3-deoxyphosphooctonate aldolase.